Consider the following 622-residue polypeptide: Chaperone protein HscA homolog (622 aa).

This sequence belongs to the heat shock protein 70 family.

In terms of biological role, chaperone involved in the maturation of iron-sulfur cluster-containing proteins. Has a low intrinsic ATPase activity which is markedly stimulated by HscB. The protein is Chaperone protein HscA homolog of Burkholderia pseudomallei (strain 1710b).